We begin with the raw amino-acid sequence, 176 residues long: Disulfide bond formation protein B (176 aa).

The Cytoplasmic portion of the chain corresponds to 1–14; that stretch reads MLRFLNQCSHGRGA. A helical transmembrane segment spans residues 15-31; that stretch reads WLLMAFTALALELTALW. At 32-49 the chain is on the periplasmic side; it reads FQHVMLLKPCVLCIYERC. A disulfide bridge links Cys-41 with Cys-44. Residues 50-65 form a helical membrane-spanning segment; that stretch reads ALFGVLGAALIGAIAP. Residues 66–71 are Cytoplasmic-facing; sequence KTPLRY. The chain crosses the membrane as a helical span at residues 72-89; the sequence is VAMVIWLYSAFRGVQLTY. Topologically, residues 90–144 are periplasmic; sequence EHTMLQLYPSPFATCDFMARFPEWLPLDKWVPQVFVASGDCAERQWEFLGLEMPQ. Cys-104 and Cys-130 are disulfide-bonded. The chain crosses the membrane as a helical span at residues 145–163; that stretch reads WLLGIFIAYLIVAVLVVIS. The Cytoplasmic portion of the chain corresponds to 164–176; the sequence is QPFKAKKRDLFGR.

This sequence belongs to the DsbB family.

The protein localises to the cell inner membrane. In terms of biological role, required for disulfide bond formation in some periplasmic proteins. Acts by oxidizing the DsbA protein. This chain is Disulfide bond formation protein B, found in Escherichia coli O6:K15:H31 (strain 536 / UPEC).